Reading from the N-terminus, the 351-residue chain is Anthranilate phosphoribosyltransferase (351 aa).

5-phospho-alpha-D-ribose 1-diphosphate-binding positions include Gly-80, 83–84 (GD), Thr-88, 90–93 (NIST), 108–116 (KHGNRSVTS), and Ser-120. Gly-80 contributes to the anthranilate binding site. Residue Ser-92 coordinates Mg(2+). Asn-111 is a binding site for anthranilate. Arg-166 is a binding site for anthranilate. Positions 229 and 230 each coordinate Mg(2+).

Belongs to the anthranilate phosphoribosyltransferase family. Homodimer. The cofactor is Mg(2+).

It carries out the reaction N-(5-phospho-beta-D-ribosyl)anthranilate + diphosphate = 5-phospho-alpha-D-ribose 1-diphosphate + anthranilate. Its pathway is amino-acid biosynthesis; L-tryptophan biosynthesis; L-tryptophan from chorismate: step 2/5. Functionally, catalyzes the transfer of the phosphoribosyl group of 5-phosphorylribose-1-pyrophosphate (PRPP) to anthranilate to yield N-(5'-phosphoribosyl)-anthranilate (PRA). This Pelodictyon phaeoclathratiforme (strain DSM 5477 / BU-1) protein is Anthranilate phosphoribosyltransferase.